We begin with the raw amino-acid sequence, 111 residues long: Cytochrome c (111 aa).

Ser1 carries the post-translational modification N-acetylserine. Heme c is bound by residues Cys22, Cys25, and His26. An N6,N6,N6-trimethyllysine modification is found at Lys80. Met88 contacts heme c.

The protein belongs to the cytochrome c family. Binds 1 heme c group covalently per subunit.

The protein localises to the mitochondrion intermembrane space. In terms of biological role, electron carrier protein. The oxidized form of the cytochrome c heme group can accept an electron from the heme group of the cytochrome c1 subunit of cytochrome reductase. Cytochrome c then transfers this electron to the cytochrome oxidase complex, the final protein carrier in the mitochondrial electron-transport chain. The sequence is that of Cytochrome c from Ulva intestinalis (Hollow green nori).